A 465-amino-acid chain; its full sequence is Putative apoptosis inhibitor ORF106 (465 aa).

The BIR repeat unit spans residues arginine 291–glutamate 357. Positions glutamate 373–glycine 382 are enriched in acidic residues. The disordered stretch occupies residues glutamate 373–asparagine 393. Residues cysteine 405–arginine 447 form an RING-type zinc finger.

This chain is Putative apoptosis inhibitor ORF106, found in Magallana gigas (Pacific oyster).